The chain runs to 397 residues: Acetate kinase (397 aa).

Residue Asn8 coordinates Mg(2+). An ATP-binding site is contributed by Lys15. Arg89 contributes to the substrate binding site. The active-site Proton donor/acceptor is the Asp146. Residues 206–210 (HLGNG), 281–283 (DLR), and 329–333 (GIGEN) each bind ATP. Residue Glu382 participates in Mg(2+) binding.

The protein belongs to the acetokinase family. Homodimer. Requires Mg(2+) as cofactor. It depends on Mn(2+) as a cofactor.

The protein localises to the cytoplasm. The catalysed reaction is acetate + ATP = acetyl phosphate + ADP. The protein operates within metabolic intermediate biosynthesis; acetyl-CoA biosynthesis; acetyl-CoA from acetate: step 1/2. Catalyzes the formation of acetyl phosphate from acetate and ATP. Can also catalyze the reverse reaction. The polypeptide is Acetate kinase (Anoxybacillus flavithermus (strain DSM 21510 / WK1)).